Reading from the N-terminus, the 152-residue chain is Deoxyuridine 5'-triphosphate nucleotidohydrolase (152 aa).

Residues 71–73, N84, 88–90, and M98 each bind substrate; these read RSG and LID.

This sequence belongs to the dUTPase family. Mg(2+) serves as cofactor.

The enzyme catalyses dUTP + H2O = dUMP + diphosphate + H(+). Its pathway is pyrimidine metabolism; dUMP biosynthesis; dUMP from dCTP (dUTP route): step 2/2. Its function is as follows. This enzyme is involved in nucleotide metabolism: it produces dUMP, the immediate precursor of thymidine nucleotides and it decreases the intracellular concentration of dUTP so that uracil cannot be incorporated into DNA. This is Deoxyuridine 5'-triphosphate nucleotidohydrolase from Hahella chejuensis (strain KCTC 2396).